The following is a 319-amino-acid chain: tRNA uridine(34) hydroxylase (319 aa).

The Rhodanese domain maps to 125–219 (LDENTVVIDA…YGKDPEVQGD (95 aa)). Residue Cys179 is the Cysteine persulfide intermediate of the active site.

The protein belongs to the TrhO family.

The catalysed reaction is uridine(34) in tRNA + AH2 + O2 = 5-hydroxyuridine(34) in tRNA + A + H2O. Its function is as follows. Catalyzes oxygen-dependent 5-hydroxyuridine (ho5U) modification at position 34 in tRNAs. In Lactococcus lactis subsp. cremoris (strain MG1363), this protein is tRNA uridine(34) hydroxylase.